We begin with the raw amino-acid sequence, 892 residues long: DNA mismatch repair protein MutS (892 aa).

The tract at residues 663-684 (TNTSLREAAPTTTLSTSDQGQM) is disordered. An ATP-binding site is contributed by 696-703 (GPNASGKS).

The protein belongs to the DNA mismatch repair MutS family.

Its function is as follows. This protein is involved in the repair of mismatches in DNA. It is possible that it carries out the mismatch recognition step. This protein has a weak ATPase activity. In Nostoc punctiforme (strain ATCC 29133 / PCC 73102), this protein is DNA mismatch repair protein MutS.